The chain runs to 857 residues: MERNSVKFHAEKRSGAFDPGSGFGSSKRVKTHHTQLLSALVVPVGHAAFRLLCPLSHVGAVIGKSGNVIKQLQQSTGAKIRVEEPPSGSPDRVITIIAQADSKSRVKLGANNNGNAEGEKKEEEVEVSKAQGALIKVFELLAAEADSDTVVCRLLTESSHAGAVIGKGGQMVGSIRKETGCKISIRIENLPICADTDDEMVEVEGNAIAVKKALVSISRCLQNCQSIDKVRMVGNRPLEKEFQASLHRPIETIIQESLPRSVEVNPYDYRLRNDEIFPRGTVARANDVIPHDTLHLRRIEAVPQGALRMHIEADRQDVLRRHVEADRQDALRRRIDVVPQETLYMPSDVLRGDCFRQHRERDDSHDSLHRPFEMVPRDAMGMPFESFPRDAYGRPIETMTQETLRGQSADYLAHRYSTLDTHPHSFTTSASMANTATMKPPPSEVEVGNQDVVFKILCSTENAGGVIGTGGKVVRMLHSETGAFINVGNTLDDCEERLIAVTASENPECQSSPAQKAIMLIFSRLFELATNKILDNGPRSSITARLVVPTSQIGCVLGKGGVIVSEMRKTTGAAIQILKVEQNPKCISENDQVVQITGEFPNVREAIFHITSRLRDSVFSNSMKNSLAKSSSALTTERFYDRQSDNPLSIGSHQSVSNPATNSSSLHRRSEDSFLSGSHSSVNYSRSVGTDPYIRPEDPFPDRFNPSAGYSHNFGRRFTMDHSDNSHHLTEAPSRLWASPPPAAPRGLSDASGGLSSARAGHVLGSGHKSAIVTNTTVEIRVPANAMSFVYGEQGYNLEQLRQISGARVIIHEPPLGTSDRIIVISGTPDQTQAAQNLLHAFILTGETSLSKKYNLN.

Residues Met1–Gly15 are compositionally biased toward basic and acidic residues. Positions Met1–Lys27 are disordered. KH domains lie at His46–Ala110, Thr149–Ile217, Asp451–Ile521, and Ser541–Ile610. The disordered stretch occupies residues Ser644–Leu755. 2 stretches are compositionally biased toward polar residues: residues Asp645–Ser665 and Ser673–Val688. The span at Phe718 to Thr730 shows a compositional bias: basic and acidic residues. The segment covering Arg746–Leu755 has biased composition (low complexity). A KH 5 domain is found at Asn775 to Leu839.

As to quaternary structure, interacts with HUA1. Interacts with FLK and PEP.

It is found in the nucleus speckle. In terms of biological role, functions in floral reproductive organ identity in the third whorl and floral determinacy specification by specifically promoting the processing of AGAMOUS (AG) pre-mRNA. Functions in association with HUA1 and HUA2. The chain is KH domain-containing protein HEN4 from Arabidopsis thaliana (Mouse-ear cress).